The chain runs to 558 residues: Dihydroxy-acid dehydratase (558 aa).

[2Fe-2S] cluster is bound at residue Cys-54. Asp-86 is a binding site for Mg(2+). [2Fe-2S] cluster is bound at residue Cys-127. Mg(2+) is bound by residues Asp-128 and Lys-129. Lys-129 is subject to N6-carboxylysine. Cys-199 serves as a coordination point for [2Fe-2S] cluster. Residue Glu-448 coordinates Mg(2+). The Proton acceptor role is filled by Ser-474.

The protein belongs to the IlvD/Edd family. As to quaternary structure, homodimer. It depends on [2Fe-2S] cluster as a cofactor. The cofactor is Mg(2+).

It catalyses the reaction (2R)-2,3-dihydroxy-3-methylbutanoate = 3-methyl-2-oxobutanoate + H2O. The catalysed reaction is (2R,3R)-2,3-dihydroxy-3-methylpentanoate = (S)-3-methyl-2-oxopentanoate + H2O. Its pathway is amino-acid biosynthesis; L-isoleucine biosynthesis; L-isoleucine from 2-oxobutanoate: step 3/4. The protein operates within amino-acid biosynthesis; L-valine biosynthesis; L-valine from pyruvate: step 3/4. Its function is as follows. Functions in the biosynthesis of branched-chain amino acids. Catalyzes the dehydration of (2R,3R)-2,3-dihydroxy-3-methylpentanoate (2,3-dihydroxy-3-methylvalerate) into 2-oxo-3-methylpentanoate (2-oxo-3-methylvalerate) and of (2R)-2,3-dihydroxy-3-methylbutanoate (2,3-dihydroxyisovalerate) into 2-oxo-3-methylbutanoate (2-oxoisovalerate), the penultimate precursor to L-isoleucine and L-valine, respectively. This Acidothermus cellulolyticus (strain ATCC 43068 / DSM 8971 / 11B) protein is Dihydroxy-acid dehydratase.